We begin with the raw amino-acid sequence, 1925 residues long: MFTLTGCRLVEKTQKVENPSVSFASSFPLIPLLLRGKSVQKKQAESKSQIKLHTQSAPFGLCPKDMMLTQAPSSVVRSRNSRNHTVNSGGSCLSASTVAIPAINDSSAAMSACSTISAQPASSMDTQMHSPKKQERVNKRVIWGIEVAEELHWKGWELGKETTRNLVLKNRSLKLQKMKYRPPKTKFFFTVIPQPIFLSPGITLTLPIVFRPLEAKEYMDQLWFEKAEGMFCVGLRATLPCHRLICRPPSLQLPMCAVGDTTEAFFCLDNVGDLPTFFTWEFSSPFQMLPATGLLEPGQASQIKVTFQPLTAVIYEVQATCWYGAGSRQRSSIQLQAVAKCAQLLVSIKHKCPEDQDAEGFQKLLYFGSVAVGCTSERQIRLHNPSAVNAPFRIEISPDELAEDQAFSCPTAHGIVLPGEKKCVSVFFHPKTLDTRTVDYCSIMPSGCASKTLLKVVGFCRGPAVSLQHYCVNFSWVNLGERSEQPLWIENQSDCTAHFQFAIDCLESVFTIRPAFGTLVGKARMTLHCAFQPTHPIICFRRVACLIHHQDPLFLDLMGTCHSDSTKPAILKPQHLTWYRTHLARGLTLYPPDILDAMLKEKKLAQDQNGALMIPIQDLEDMPAPQYPYIPPMTEFFFDGTSDITIFPPPISVEPVEVDFGACPGPEAPNPVPLCLMNHTKGKIMVVWTRRSDCPFWVTPESCDVPPLKSMAMRLHFQPPHPNCLYTVELEAFAIYKVLQSYSNIEEDCTMCPSWCLTVRARGHSYFAGFEHHIPQYSLDVPKLFPAVSSGEPTYRSLLLVNKDCKLLTFSLAPQRGSDVILRPTSGLVAPGAHQIILICTYPEGSSWKQHTFYLQCNASPQYLKEVSMYSREEPLQLKLDTHKSLYFKPTWVGCSSTSPFTFRNPSRLPLQFEWRVSEQHRKLLAVQPSRGLIQPNERLTLTWTFSPLEETKYLFQVGMWVWEAGLSPNANPAATTHYMLRLVGVGLTSSLSAKEKELAFGNVLVNSKQSRFLVLLNDGNCTLYYRLYLEQGSPEAVDNHPLALQLDRTEGSMPPRSQDTICLTACPKQRSQYSWTITYSLLSHRDNKAGEKQELCCVSLVAVYPLLSILDVSSMGSAEGITRKHLWRLFSLDLLNSYLERDPTPCELTYKVPTRHSMSQIPPVLTPLRLDFNFGAAPFKAPPSVVFLALKNSGVVSLDWAFLLPSDQRIDVELWAEQAELNSTELHQMRVQDNCLFSISPKAGSLSPGQEQMVELKYSHLFIGTDHLPVLFKVSHGREILLNFIGVTVKPEQKYVHFTSTTHQFIPIPIGDTLPPRQIYELYNGGSVPVTYEVQTDVLSQVQEKNFDHPIFCCLNPKGEIQPGSTARVLWIFSPIEAKTYTVDVPIHILGWNSALIHFQGVGYNPHMMGDTAPFHNISSWDNSSIHSRLVVPGQNVFLSQSHISLGNIPVQSKCSRLLFLNNISKNEEIAFSWQPSPLDFGEVSVSPMIGVVAPEETVPFVVTLRASVHASFYSADLVCKLYSQQLMRQYHKELQEWKDEKVRQEVEFTITDMKVKKRTCCTACEPARKYKTLPPIKNQQSVSRPASWKLQTPKEEVSWPCPQPPSPGMLCLGLTARAHATDYFLANFFSEFPCHFLHRELPKRKAPREESETSEEKSPNKWGPVSKQKKQLLVDILTTIIRGLLEDKNFHEAVDQSLVEQVPYFRQFWNEQSTKFMDQKNSLYLMPILPVPSSSWEDGKGKQPKEDRPEHYPGLGKKEEGEEEKGEEEEEELEEEEEEEEETEEEELGKEEIEEKEEERDEKEEKVSWAGIGPTPQPESQESMQWQWQQQLNVMVKEEQEQDEKEAIRRLPAFANLQEALLENMIQNILVEASRGEVVLTSRPRVIALPPFCVPRSLTPDTLLPTQQAEVLHPVVPLPTDLP.

A helical transmembrane segment spans residues 188-208 (FFTVIPQPIFLSPGITLTLPI). The MSP domain maps to 877–986 (QLKLDTHKSL…THYMLRLVGV (110 aa)). Residues 1525 to 1550 (SQQLMRQYHKELQEWKDEKVRQEVEF) are a coiled coil. 2 disordered regions span residues 1645–1667 (KRKA…WGPV) and 1736–1823 (SSWE…PESQ). Basic and acidic residues-rich tracts occupy residues 1649 to 1661 (PREE…EKSP) and 1739 to 1762 (EDGK…KKEE). Residues 1763-1804 (GEEEKGEEEEEELEEEEEEEEETEEEELGKEEIEEKEEERDE) show a composition bias toward acidic residues.

The protein belongs to the CFAP65 family. As to quaternary structure, interacts with CFAP47.

The protein localises to the cell projection. It is found in the cilium. It localises to the flagellum membrane. Its subcellular location is the cytoplasmic vesicle. The protein resides in the secretory vesicle. The protein localises to the acrosome membrane. It is found in the cytoplasm. In terms of biological role, plays a role in flagellar formation and sperm motility. This chain is Cilia- and flagella-associated protein 65, found in Homo sapiens (Human).